The following is a 267-amino-acid chain: 2-keto-3-deoxy-L-rhamnonate aldolase (267 aa).

His49 acts as the Proton acceptor in catalysis. Gln151 serves as a coordination point for substrate. Glu153 contributes to the Mg(2+) binding site. Positions 178 and 179 each coordinate substrate. Mg(2+) is bound at residue Asp179.

The protein belongs to the HpcH/HpaI aldolase family. KDR aldolase subfamily. In terms of assembly, homohexamer. It depends on Mg(2+) as a cofactor.

It catalyses the reaction 2-dehydro-3-deoxy-L-rhamnonate = (S)-lactaldehyde + pyruvate. Its function is as follows. Catalyzes the reversible retro-aldol cleavage of 2-keto-3-deoxy-L-rhamnonate (KDR) to pyruvate and lactaldehyde. The protein is 2-keto-3-deoxy-L-rhamnonate aldolase of Shigella boydii serotype 4 (strain Sb227).